A 315-amino-acid polypeptide reads, in one-letter code: MVDFQLNNFSFDPVVSLGLAAFLFLLIALPISFWSVAGGSDSSKARFLVATSNLFLTSQLILRWWQSGHFPISNLYESLCFLTWGCTLAQLFVERAWRSPIVSAVATPVSLLSIGFASFVLPENLQSSAPLVPALRSSWLVMHVSVIMCSYAALLIGSILSFGVFLVDGKKQFNIRNSSFGSGSFRQSSELYLDERNENLNSIQPIEFTNAEQLDSLSYRSITAGFLLLTVGLISGAVWANEAWGSWWSWDPKETWALICWLVYAAYLHTRLTRGWQGKKPAILAIAGFFVIIVCYIGVNLLGVGLHSYGWFFDT.

7 helical membrane-spanning segments follow: residues 14 to 34 (VVSL…ISFW), 72 to 92 (ISNL…AQLF), 101 to 121 (IVSA…SFVL), 146 to 166 (VIMC…GVFL), 221 to 241 (SITA…VWAN), 255 to 272 (TWAL…HTRL), and 282 to 302 (AILA…VNLL).

The protein belongs to the CcmF/CycK/Ccl1/NrfE/CcsA family. As to quaternary structure, may interact with ccs1.

The protein resides in the cellular thylakoid membrane. Functionally, required during biogenesis of c-type cytochromes (cytochrome c6 and cytochrome f) at the step of heme attachment. This Prochlorococcus marinus (strain NATL1A) protein is Cytochrome c biogenesis protein CcsA.